Here is a 178-residue protein sequence, read N- to C-terminus: Mediator of RNA polymerase II transcription subunit 31 (178 aa).

A compositionally biased stretch (acidic residues) spans 129–140 (EGQELEESEDEA). The tract at residues 129–178 (EGQELEESEDEADIRQKDTEDEDDEETMKKPDADTAEKNSTTSTVSKKEK) is disordered. Over residues 155-165 (TMKKPDADTAE) the composition is skewed to basic and acidic residues. Over residues 166 to 178 (KNSTTSTVSKKEK) the composition is skewed to polar residues.

Belongs to the Mediator complex subunit 31 family. In terms of assembly, component of the Mediator complex.

Its subcellular location is the nucleus. Its function is as follows. Component of the Mediator complex, a coactivator involved in the regulated transcription of nearly all RNA polymerase II-dependent genes. Mediator functions as a bridge to convey information from gene-specific regulatory proteins to the basal RNA polymerase II transcription machinery. Mediator is recruited to promoters by direct interactions with regulatory proteins and serves as a scaffold for the assembly of a functional preinitiation complex with RNA polymerase II and the general transcription factors. The polypeptide is Mediator of RNA polymerase II transcription subunit 31 (Caenorhabditis elegans).